The chain runs to 303 residues: RELT-like protein 2 (303 aa).

The helical transmembrane segment at 15-35 (LYMLFLLVLVFFLMGLVGFMI) threads the bilayer. 2 disordered regions span residues 46–67 (CRTS…DDDM) and 132–303 (CLHC…AGSM). At S52 the chain carries Phosphoserine. Composition is skewed to basic and acidic residues over residues 148–158 (RSKEGKSRPRT) and 172–188 (THIE…DGSP). The span at 194-212 (GSGGGQDPGGGQGSGGGQP) shows a compositional bias: gly residues. A compositionally biased stretch (polar residues) spans 278–296 (QEANGQPSKPDTSDHQVSL).

This sequence belongs to the RELT family. As to quaternary structure, interacts with RELT, RELL1 and OXSR1. Interacts with PLSCR1. Interacts with TRAF2. In terms of processing, phosphorylated in vitro by OXSR1. In terms of tissue distribution, primarily expressed in spleen, thymus, testis, peripheral blood leukocytes, brain and placenta. Not detected in prostate, ovary, small intestine, colon, heart, lung, liver, skeletal muscle, kidney and pancreas.

The protein resides in the cell membrane. Its function is as follows. Induces activation of MAPK14/p38 cascade, when overexpressed. Induces apoptosis, when overexpressed. The chain is RELT-like protein 2 (RELL2) from Homo sapiens (Human).